Consider the following 209-residue polypeptide: Uracil phosphoribosyltransferase (209 aa).

5-phospho-alpha-D-ribose 1-diphosphate-binding positions include R79, R104, and 131 to 139; that span reads DPMLATGGS. Uracil contacts are provided by residues I194 and 199–201; that span reads GDA. D200 contributes to the 5-phospho-alpha-D-ribose 1-diphosphate binding site.

Belongs to the UPRTase family. Requires Mg(2+) as cofactor.

The catalysed reaction is UMP + diphosphate = 5-phospho-alpha-D-ribose 1-diphosphate + uracil. It participates in pyrimidine metabolism; UMP biosynthesis via salvage pathway; UMP from uracil: step 1/1. With respect to regulation, allosterically activated by GTP. Its function is as follows. Catalyzes the conversion of uracil and 5-phospho-alpha-D-ribose 1-diphosphate (PRPP) to UMP and diphosphate. The protein is Uracil phosphoribosyltransferase of Bacillus licheniformis (strain ATCC 14580 / DSM 13 / JCM 2505 / CCUG 7422 / NBRC 12200 / NCIMB 9375 / NCTC 10341 / NRRL NRS-1264 / Gibson 46).